The sequence spans 438 residues: UDP-N-acetylmuramoylalanine--D-glutamate ligase (438 aa).

ATP is bound at residue 115 to 121 (GSNGKST).

It belongs to the MurCDEF family.

It localises to the cytoplasm. The catalysed reaction is UDP-N-acetyl-alpha-D-muramoyl-L-alanine + D-glutamate + ATP = UDP-N-acetyl-alpha-D-muramoyl-L-alanyl-D-glutamate + ADP + phosphate + H(+). Its pathway is cell wall biogenesis; peptidoglycan biosynthesis. Functionally, cell wall formation. Catalyzes the addition of glutamate to the nucleotide precursor UDP-N-acetylmuramoyl-L-alanine (UMA). The protein is UDP-N-acetylmuramoylalanine--D-glutamate ligase of Vibrio atlanticus (strain LGP32) (Vibrio splendidus (strain Mel32)).